We begin with the raw amino-acid sequence, 351 residues long: DNA integrity scanning protein DisA (351 aa).

One can recognise a DAC domain in the interval 4–142 (RSGFWQVLQQ…GPMKYILRDF (139 aa)). ATP contacts are provided by residues Gly71, Leu89, and 102–106 (TRHRT).

Belongs to the DisA family. In terms of assembly, homooctamer. It depends on Mg(2+) as a cofactor.

The catalysed reaction is 2 ATP = 3',3'-c-di-AMP + 2 diphosphate. In terms of biological role, participates in a DNA-damage check-point that is active prior to asymmetric division when DNA is damaged. DisA forms globular foci that rapidly scan along the chromosomes during sporulation, searching for lesions. When a lesion is present, DisA pauses at the lesion site. This triggers a cellular response that culminates in a temporary block in sporulation initiation. Its function is as follows. Also has diadenylate cyclase activity, catalyzing the condensation of 2 ATP molecules into cyclic di-AMP (c-di-AMP). c-di-AMP acts as a signaling molecule that couples DNA integrity with progression of sporulation. The rise in c-di-AMP level generated by DisA while scanning the chromosome, operates as a positive signal that advances sporulation; upon encountering a lesion, the DisA focus arrests at the damaged site and halts c-di-AMP synthesis. This chain is DNA integrity scanning protein DisA, found in Symbiobacterium thermophilum (strain DSM 24528 / JCM 14929 / IAM 14863 / T).